An 887-amino-acid chain; its full sequence is Dystrophin-like protein 1 (887 aa).

One can recognise a PID domain in the interval 30 to 197 (YQHGIHFEAK…KISMQSEDEA (168 aa)). Composition is skewed to basic and acidic residues over residues 176 to 186 (MQEKHEDEAAK) and 205 to 216 (IEERGGREEDSR). 5 disordered regions span residues 176–254 (MQEK…GTAI), 506–606 (EIHH…QYER), 641–753 (QFDM…KNTA), 804–839 (IAEE…PPNT), and 853–887 (NVDR…GYPQ). The span at 242–254 (KPSTTSSSGGTAI) shows a compositional bias: polar residues. A coiled-coil region spans residues 434–506 (QLMRSQLDQA…QMLETKITSE (73 aa)). Residues 510-519 (SSSQPPQHQP) show a composition bias toward low complexity. A compositionally biased stretch (basic and acidic residues) spans 573 to 588 (KESKERRKDEGTRTEP). The segment covering 597–606 (DYSSSDQYER) has biased composition (polar residues). Composition is skewed to polar residues over residues 816–827 (NRNNLPSSTNSS) and 863–887 (SLLT…GYPQ).

As to quaternary structure, component of the dystrophin glycoprotein complex (DGC). Interacts with zyx-1. Expressed in muscles of the head, body wall and vulva. In some animals, weaker expression is observed in the intestinal muscles (at protein level). Isoform a is expressed in lateral neurons SDQL and SDQR.

In terms of biological role, together with dys-1 and hlh-1, participates in a common muscular function. This chain is Dystrophin-like protein 1, found in Caenorhabditis elegans.